Here is a 264-residue protein sequence, read N- to C-terminus: Putative [LysW]-aminoadipate/[LysW]-glutamate kinase (264 aa).

Residues 34–35 (GG), Arg61, and Asn169 each bind substrate.

Belongs to the acetylglutamate kinase family. LysZ subfamily.

Its subcellular location is the cytoplasm. It catalyses the reaction [amino-group carrier protein]-C-terminal-N-(1,4-dicarboxybutan-1-yl)-L-glutamine + ATP = [amino-group carrier protein]-C-terminal-N-(1-carboxy-5-phosphooxy-5-oxopentan-1-yl)-L-glutamine + ADP. The enzyme catalyses [amino-group carrier protein]-C-terminal-gamma-(L-glutamyl)-L-glutamate + ATP = [amino-group carrier protein]-C-terminal-gamma-(5-phospho-L-glutamyl)-L-glutamate + ADP. Its pathway is amino-acid biosynthesis; L-lysine biosynthesis via AAA pathway; L-lysine from L-alpha-aminoadipate (Thermus route): step 2/5. It participates in amino-acid biosynthesis; L-arginine biosynthesis. Its function is as follows. Involved in both the arginine and lysine biosynthetic pathways. Phosphorylates the LysW-bound precursors glutamate (for arginine biosynthesis), respectively alpha-aminoadipate (for lysine biosynthesis). The sequence is that of Putative [LysW]-aminoadipate/[LysW]-glutamate kinase from Ignicoccus hospitalis (strain KIN4/I / DSM 18386 / JCM 14125).